Reading from the N-terminus, the 225-residue chain is Adenosylcobinamide-GDP ribazoletransferase (225 aa).

Helical transmembrane passes span 34–54, 93–113, 116–136, 165–185, and 204–224; these read FVGI…FWFL, NLGT…FYSF, VSAF…LLLL, PLLL…AITI, and VVGA…YFLA.

Belongs to the CobS family. Mg(2+) serves as cofactor.

It localises to the cell membrane. It catalyses the reaction alpha-ribazole + adenosylcob(III)inamide-GDP = adenosylcob(III)alamin + GMP + H(+). The enzyme catalyses alpha-ribazole 5'-phosphate + adenosylcob(III)inamide-GDP = adenosylcob(III)alamin 5'-phosphate + GMP + H(+). It participates in cofactor biosynthesis; adenosylcobalamin biosynthesis; adenosylcobalamin from cob(II)yrinate a,c-diamide: step 7/7. Functionally, joins adenosylcobinamide-GDP and alpha-ribazole to generate adenosylcobalamin (Ado-cobalamin). Also synthesizes adenosylcobalamin 5'-phosphate from adenosylcobinamide-GDP and alpha-ribazole 5'-phosphate. This is Adenosylcobinamide-GDP ribazoletransferase (cobS1) from Archaeoglobus fulgidus (strain ATCC 49558 / DSM 4304 / JCM 9628 / NBRC 100126 / VC-16).